A 255-amino-acid polypeptide reads, in one-letter code: Altered inheritance of mitochondria protein 36, mitochondrial (255 aa).

The transit peptide at 1–40 (MLRPLRKSVLASCRHCFKVCGGLPQKQLPLFSPLLLRARY) directs the protein to the mitochondrion. The helical transmembrane segment at 64–82 (IFLVAIIGTVIFVKTVQSL) threads the bilayer.

Belongs to the AIM36 family.

The protein localises to the mitochondrion membrane. The sequence is that of Altered inheritance of mitochondria protein 36, mitochondrial (AIM36) from Saccharomyces cerevisiae (strain RM11-1a) (Baker's yeast).